We begin with the raw amino-acid sequence, 473 residues long: tRNA modification GTPase MnmE (473 aa).

3 residues coordinate (6S)-5-formyl-5,6,7,8-tetrahydrofolate: Arg31, Glu95, and Arg134. One can recognise a TrmE-type G domain in the interval 230-394; it reads GVSTVIAGKP…LKQHMGDLVK (165 aa). GTP contacts are provided by residues 240-245, 259-265, and 284-287; these read NAGKST, SHMPGTT, and DTAG. Residues Ser244 and Thr265 each coordinate Mg(2+). Residue Lys473 participates in (6S)-5-formyl-5,6,7,8-tetrahydrofolate binding.

This sequence belongs to the TRAFAC class TrmE-Era-EngA-EngB-Septin-like GTPase superfamily. TrmE GTPase family. In terms of assembly, homodimer. Heterotetramer of two MnmE and two MnmG subunits. K(+) is required as a cofactor.

It is found in the cytoplasm. Functionally, exhibits a very high intrinsic GTPase hydrolysis rate. Involved in the addition of a carboxymethylaminomethyl (cmnm) group at the wobble position (U34) of certain tRNAs, forming tRNA-cmnm(5)s(2)U34. The polypeptide is tRNA modification GTPase MnmE (Chlorobaculum tepidum (strain ATCC 49652 / DSM 12025 / NBRC 103806 / TLS) (Chlorobium tepidum)).